Consider the following 813-residue polypeptide: Leucine--tRNA ligase (813 aa).

The 'HIGH' region signature appears at 40–51; the sequence is SYPSGSKLHAGH. Residues 572-576 carry the 'KMSKS' region motif; it reads KMSKS. Lys-575 lines the ATP pocket.

The protein belongs to the class-I aminoacyl-tRNA synthetase family.

The protein resides in the cytoplasm. The enzyme catalyses tRNA(Leu) + L-leucine + ATP = L-leucyl-tRNA(Leu) + AMP + diphosphate. The polypeptide is Leucine--tRNA ligase (Clostridium botulinum (strain Langeland / NCTC 10281 / Type F)).